The following is a 450-amino-acid chain: tRNA modification GTPase MnmE (450 aa).

Arg24, Glu82, and Lys121 together coordinate (6S)-5-formyl-5,6,7,8-tetrahydrofolate. Positions 218–375 constitute a TrmE-type G domain; the sequence is GMHVVLVGQP…LRQVLLEAVG (158 aa). Asn228 serves as a coordination point for K(+). GTP is bound by residues 228–233, 247–253, 272–275, and 356–358; these read NVGKSS, TDIAGTT, DTAG, and SAR. Ser232 serves as a coordination point for Mg(2+). Positions 247, 249, and 252 each coordinate K(+). Thr253 is a Mg(2+) binding site. Lys450 is a binding site for (6S)-5-formyl-5,6,7,8-tetrahydrofolate.

The protein belongs to the TRAFAC class TrmE-Era-EngA-EngB-Septin-like GTPase superfamily. TrmE GTPase family. In terms of assembly, homodimer. Heterotetramer of two MnmE and two MnmG subunits. It depends on K(+) as a cofactor.

The protein localises to the cytoplasm. Functionally, exhibits a very high intrinsic GTPase hydrolysis rate. Involved in the addition of a carboxymethylaminomethyl (cmnm) group at the wobble position (U34) of certain tRNAs, forming tRNA-cmnm(5)s(2)U34. This chain is tRNA modification GTPase MnmE, found in Laribacter hongkongensis (strain HLHK9).